Consider the following 515-residue polypeptide: Mucin-like protein Glc1.8a (515 aa).

The signal sequence occupies residues 1–20 (MSQITLIILILAIGFSCTKS). Over 21-467 (HPINSTRDGE…ANDIKKPAFP (447 aa)) the chain is Extracellular. Asn-24, Asn-45, Asn-51, Asn-60, Asn-85, Asn-93, Asn-102, Asn-123, Asn-129, Asn-138, Asn-180, Asn-201, Asn-207, Asn-216, Asn-258, Asn-279, Asn-285, Asn-319, Asn-327, Asn-336, Asn-357, Asn-363, Asn-372, Asn-397, Asn-405, Asn-413, Asn-434, and Asn-441 each carry an N-linked (GlcNAc...) asparagine; by host glycan. The interval 80–114 (SKKDENITGQSEINTSAKSQPINSTRDGEDSGTDL) is disordered. A compositionally biased stretch (polar residues) spans 86–104 (ITGQSEINTSAKSQPINST). The disordered stretch occupies residues 314–358 (SKKDENVTGQSEINTSAKSQPINSTRDGEDSGTDLKNLLTDPANT). Over residues 320–338 (VTGQSEINTSAKSQPINST) the composition is skewed to polar residues. The segment at 393–413 (RKDENVTGQSEFNISTNSNLN) is disordered. The chain crosses the membrane as a helical span at residues 468 to 488 (YCIILITFQIVTVGMIIYLVF). Residues 489–515 (RTMRKPCQSERAIPLNTFGFGNNSSHE) are Cytoplasmic-facing.

The protein belongs to the polydnaviridae Glc1.8 protein family.

It localises to the host membrane. In terms of biological role, involved in suppression of the insect cellular immune response. Inhibits host hemocyte adhesion and phagocytosis. The protein is Mucin-like protein Glc1.8a (O9) of Microplitis demolitor (Parasitoid wasp).